The sequence spans 308 residues: Ribonuclease Z (308 aa).

Zn(2+) is bound by residues His-63, His-65, Asp-67, His-68, His-141, Asp-212, and His-270. Asp-67 (proton acceptor) is an active-site residue.

Belongs to the RNase Z family. As to quaternary structure, homodimer. Zn(2+) is required as a cofactor.

The enzyme catalyses Endonucleolytic cleavage of RNA, removing extra 3' nucleotides from tRNA precursor, generating 3' termini of tRNAs. A 3'-hydroxy group is left at the tRNA terminus and a 5'-phosphoryl group is left at the trailer molecule.. In terms of biological role, zinc phosphodiesterase, which displays some tRNA 3'-processing endonuclease activity. Probably involved in tRNA maturation, by removing a 3'-trailer from precursor tRNA. This is Ribonuclease Z from Pediococcus pentosaceus (strain ATCC 25745 / CCUG 21536 / LMG 10740 / 183-1w).